Consider the following 363-residue polypeptide: Peptide chain release factor 1 (363 aa).

An N5-methylglutamine modification is found at glutamine 237.

Belongs to the prokaryotic/mitochondrial release factor family. Post-translationally, methylated by PrmC. Methylation increases the termination efficiency of RF1.

It is found in the cytoplasm. Functionally, peptide chain release factor 1 directs the termination of translation in response to the peptide chain termination codons UAG and UAA. The sequence is that of Peptide chain release factor 1 from Mesoplasma florum (strain ATCC 33453 / NBRC 100688 / NCTC 11704 / L1) (Acholeplasma florum).